A 152-amino-acid chain; its full sequence is Superoxide dismutase [Cu-Zn] 5 (152 aa).

3 residues coordinate Cu cation: His-44, His-46, and His-61. Cysteines 55 and 144 form a disulfide. The Zn(2+) site is built by His-61, His-69, His-78, and Asp-81. His-118 is a binding site for Cu cation.

The protein belongs to the Cu-Zn superoxide dismutase family. Cu cation serves as cofactor. Requires Zn(2+) as cofactor.

The catalysed reaction is 2 superoxide + 2 H(+) = H2O2 + O2. In terms of biological role, destroys radicals which are normally produced within the cells and which are toxic to biological systems. This chain is Superoxide dismutase [Cu-Zn] 5 (sodE), found in Dictyostelium discoideum (Social amoeba).